Consider the following 163-residue polypeptide: Endoribonuclease YbeY (163 aa).

3 residues coordinate Zn(2+): His129, His133, and His139.

This sequence belongs to the endoribonuclease YbeY family. It depends on Zn(2+) as a cofactor.

The protein resides in the cytoplasm. Single strand-specific metallo-endoribonuclease involved in late-stage 70S ribosome quality control and in maturation of the 3' terminus of the 16S rRNA. The polypeptide is Endoribonuclease YbeY (Picosynechococcus sp. (strain ATCC 27264 / PCC 7002 / PR-6) (Agmenellum quadruplicatum)).